Reading from the N-terminus, the 511-residue chain is Maturase K (511 aa).

The protein belongs to the intron maturase 2 family. MatK subfamily.

It localises to the plastid. Its subcellular location is the chloroplast. Usually encoded in the trnK tRNA gene intron. Probably assists in splicing its own and other chloroplast group II introns. This Nandina domestica (Heavenly bamboo) protein is Maturase K.